A 279-amino-acid chain; its full sequence is Small ribosomal subunit protein uS2 (279 aa).

Positions 232 to 279 (RRRGTDEKPEAGVASDEPLAEWERELLEEPKKSDEPKSDEQPAAAAAE) are disordered. The span at 252–271 (EWERELLEEPKKSDEPKSDE) shows a compositional bias: basic and acidic residues.

Belongs to the universal ribosomal protein uS2 family.

The chain is Small ribosomal subunit protein uS2 from Salinispora arenicola (strain CNS-205).